The chain runs to 440 residues: C-terminal-binding protein 1 (440 aa).

Residues Ser-100, 180–185 (IGLGRV), Asp-204, 237–243 (CGLNEHN), 264–266 (TAR), and Asp-290 contribute to the NAD(+) site. The active site involves Arg-266. Glu-295 is an active-site residue. His-315 serves as the catalytic Proton donor. 315-318 (HAAW) serves as a coordination point for NAD(+). Positions 409–440 (HAHPAVAHPPHAPSPGQTIKPEADRDHPSDQL) are disordered. Residues 429–440 (PEADRDHPSDQL) show a composition bias toward basic and acidic residues.

This sequence belongs to the D-isomer specific 2-hydroxyacid dehydrogenase family. It depends on NAD(+) as a cofactor.

It is found in the nucleus. Corepressor targeting diverse transcription regulators. Has dehydrogenase activity. The chain is C-terminal-binding protein 1 (ctbp1) from Xenopus laevis (African clawed frog).